We begin with the raw amino-acid sequence, 372 residues long: Beta-1,4-galactosyltransferase 2 (372 aa).

Residues 1 to 15 are Cytoplasmic-facing; it reads MSRLLGGTLERVCKA. A helical; Signal-anchor for type II membrane protein transmembrane segment spans residues 16-36; that stretch reads VLLLCLLHFLVAVILYFDVYA. The Lumenal portion of the chain corresponds to 37 to 372; the sequence is QHLAFFSRFS…GRPPSWPPRG (336 aa). Positions 56–97 are disordered; sequence PAASSSSSSSNCSRPNATASSSGLPEVPSALPGPTAPTLPPC. Residues Asn66 and Asn71 are each glycosylated (N-linked (GlcNAc...) asparagine). Residues 66–78 are compositionally biased toward polar residues; the sequence is NCSRPNATASSSG. Cys97 and Cys139 are oxidised to a cystine. Residues 150–154, 189–191, 217–218, and Trp278 each bind UDP-alpha-D-galactose; these read PFRHR, FNR, and VD. Cys211 and Cys230 are disulfide-bonded. Asp218 serves as a coordination point for Mn(2+). An N-acetyl-D-glucosamine-binding site is contributed by 280 to 283; sequence GEDD. Residue His311 coordinates Mn(2+). 311-313 contacts UDP-alpha-D-galactose; that stretch reads HDR. An N-acetyl-D-glucosamine-binding site is contributed by Arg323. Asn357 carries an N-linked (GlcNAc...) asparagine glycan.

The protein belongs to the glycosyltransferase 7 family. Mn(2+) serves as cofactor. In terms of tissue distribution, weakly expressed in various tissues. Highest expression in prostate, testis, ovary, intestine, muscle, and in fetal brain.

It is found in the golgi apparatus. Its subcellular location is the golgi stack membrane. The enzyme catalyses D-glucose + UDP-alpha-D-galactose = lactose + UDP + H(+). The catalysed reaction is an N-acetyl-beta-D-glucosaminyl derivative + UDP-alpha-D-galactose = a beta-D-galactosyl-(1-&gt;4)-N-acetyl-beta-D-glucosaminyl derivative + UDP + H(+). It catalyses the reaction N-acetyl-D-glucosamine + UDP-alpha-D-galactose = beta-D-galactosyl-(1-&gt;4)-N-acetyl-D-glucosamine + UDP + H(+). It functions in the pathway protein modification; protein glycosylation. In terms of biological role, responsible for the synthesis of complex-type N-linked oligosaccharides in many glycoproteins as well as the carbohydrate moieties of glycolipids. Can produce lactose. This chain is Beta-1,4-galactosyltransferase 2, found in Homo sapiens (Human).